The primary structure comprises 259 residues: GEM-like protein 1 (259 aa).

Basic and acidic residues predominate over residues 1-11 (MSGQENHDHGR). Residues 1 to 79 (MSGQENHDHG…PSPAPRNTMD (79 aa)) are disordered. Residues 13–30 (SSTPAAASEPSKAAAHSS) show a composition bias toward low complexity. The 78-residue stretch at 138–215 (KVFKQTFDCL…NQLKAVNPST (78 aa)) folds into the GRAM domain.

The protein belongs to the GEM family. In terms of assembly, interacts with AFH1.

The polypeptide is GEM-like protein 1 (FIP1) (Arabidopsis thaliana (Mouse-ear cress)).